Reading from the N-terminus, the 635-residue chain is MNLKTAYEPYFKIGAAISRWNLHTPAHTKLLAEQFNSFTCENDMKPMYYLDREANKKDPEKYNLSPALTFENAIPYLEFAKDNKIAMRGHTLVWHNQTPKWFFCERYNENFPMADRETILARLESYIHGVLDFVQTNYPGIIYAWDVVNEIVDEGAFRKSIWTETVGEDFFIKAFEFARKYAAPEVSLFYNDYETAQPWKRDFILEKVLGPLIDKKLIDGMGMQSHLLMDHPDISEYRTALEMYGSTGLQIHITELDMHNADPSEESMHALATRYQEFFQTYLDAKKSGKANITSVTFWNLLDENSWLSGFRRETSYPLVFKGKCEAKEAYYAVLKAAVSDDSIDKWVPDYSEEDYKLQGMPTPDIKRFRENIWQENEYNYEASYGFIPNLFAYLHNDDVKRDCMLVIPGGGYCMCCSHEGELAAMEFYNRGMNAFVLSYTTDITMSVPLHKQPLEDISRAVRFIRKNASKYNIDGKKLVIMGFSAGSHVCGSLAVHFDDVKDNNPEYADISGRPDGVILSYPVITTGRYTHADSVRTLLGANPTDEELTYFSLEKQVKDNTPPCFIWQTEEDSVVPVENSYLFANALREKKIPFAHYVFPRGFHGLTVANDEFFSGWSGGEYSMEQTMRARFAV.

The 337-residue stretch at 1–337 folds into the GH10 domain; it reads MNLKTAYEPY…KEAYYAVLKA (337 aa). The Proton donor role is filled by Glu-150. The active-site Nucleophile is the Glu-255.

This sequence belongs to the glycosyl hydrolase 10 (cellulase F) family.

It carries out the reaction Endohydrolysis of (1-&gt;4)-beta-D-xylosidic linkages in xylans.. It participates in glycan degradation; xylan degradation. In terms of biological role, b.fibrisolvens is located in the rumen of ruminant animals, where it contributes to the animal's digestion of plant material by hydrolyzing hemicellulose with its xylanases. The sequence is that of Endo-1,4-beta-xylanase B (xynB) from Butyrivibrio fibrisolvens.